The chain runs to 277 residues: Large ribosomal subunit protein mL46 (277 aa).

At Lys-228 the chain carries N6-acetyllysine.

This sequence belongs to the mitochondrion-specific ribosomal protein mL46 family. Component of the mitochondrial ribosome large subunit (39S) which comprises a 16S rRNA and about 50 distinct proteins.

The protein resides in the mitochondrion. The polypeptide is Large ribosomal subunit protein mL46 (MRPL46) (Bos taurus (Bovine)).